Here is a 231-residue protein sequence, read N- to C-terminus: Probable GTP-binding protein EngB (231 aa).

An EngB-type G domain is found at 51–231 (DLSEIAFAGR…RAQLAALASP (181 aa)). GTP is bound by residues 59-66 (GRSNVGKS), 86-90 (GRTQE), 109-112 (DLPG), 176-179 (TKAD), and 210-212 (TSS). Mg(2+) is bound by residues Ser-66 and Thr-88.

The protein belongs to the TRAFAC class TrmE-Era-EngA-EngB-Septin-like GTPase superfamily. EngB GTPase family. Requires Mg(2+) as cofactor.

In terms of biological role, necessary for normal cell division and for the maintenance of normal septation. The sequence is that of Probable GTP-binding protein EngB from Rhodospirillum rubrum (strain ATCC 11170 / ATH 1.1.1 / DSM 467 / LMG 4362 / NCIMB 8255 / S1).